The sequence spans 835 residues: Phenylalanine--tRNA ligase beta subunit (835 aa).

Residues 44 to 160 enclose the tRNA-binding domain; that stretch reads PATTGPLVLG…ESGQPGDDAR (117 aa). The B5 domain maps to 419–494; the sequence is PTMPSITMPV…RLEGLEAIPT (76 aa). Residues D472, D478, E481, and E482 each contribute to the Mg(2+) site. Residues 741 to 834 enclose the FDX-ACB domain; that stretch reads SAFPALHQDI…AKERLGAEMR (94 aa).

Belongs to the phenylalanyl-tRNA synthetase beta subunit family. Type 1 subfamily. Tetramer of two alpha and two beta subunits. Mg(2+) serves as cofactor.

It localises to the cytoplasm. The enzyme catalyses tRNA(Phe) + L-phenylalanine + ATP = L-phenylalanyl-tRNA(Phe) + AMP + diphosphate + H(+). This is Phenylalanine--tRNA ligase beta subunit from Corynebacterium efficiens (strain DSM 44549 / YS-314 / AJ 12310 / JCM 11189 / NBRC 100395).